Consider the following 137-residue polypeptide: Large ribosomal subunit protein uL16 (137 aa).

Belongs to the universal ribosomal protein uL16 family. Part of the 50S ribosomal subunit.

In terms of biological role, binds 23S rRNA and is also seen to make contacts with the A and possibly P site tRNAs. The sequence is that of Large ribosomal subunit protein uL16 from Rhodopseudomonas palustris (strain BisB18).